Consider the following 74-residue polypeptide: M-myrmeciitoxin-Mb1a (74 aa).

The signal sequence occupies residues 1 to 26 (MKLSCLLLTLAIIVVLTIVHAPNVEA). Residues 27–50 (KALADPESDAVGFADAVGEADPNA) constitute a propeptide that is removed on maturation. Gln73 carries the post-translational modification Glutamine amide.

Belongs to the formicidae venom precursor-01 superfamily. Ant pilosulin family. In terms of tissue distribution, expressed by the venom gland.

The protein resides in the secreted. Functionally, shows moderate activity against E.coli and S.aureus (MIC&lt;25 uM), slight activity against B.subtilis (MIC&lt;50 uM), and no activity against L.garvieae, P.aeruginosa, C.albicans, and S.cerevisiae. Has no hemolytic nor cytolytic activity. Causes an IgE-independent histamine release. This is M-myrmeciitoxin-Mb1a from Myrmecia banksi (Jack jumper ant).